An 825-amino-acid polypeptide reads, in one-letter code: Probable phosphoketolase (825 aa).

This sequence belongs to the XFP family. The cofactor is thiamine diphosphate.

The polypeptide is Probable phosphoketolase (Bifidobacterium animalis subsp. lactis (strain AD011)).